The chain runs to 153 residues: Nucleoside diphosphate kinase (153 aa).

Residues K11, F59, R87, T93, R104, and N114 each coordinate ATP. H117 functions as the Pros-phosphohistidine intermediate in the catalytic mechanism.

It belongs to the NDK family. In terms of assembly, homotrimer. Requires Mg(2+) as cofactor.

It catalyses the reaction a 2'-deoxyribonucleoside 5'-diphosphate + ATP = a 2'-deoxyribonucleoside 5'-triphosphate + ADP. The enzyme catalyses a ribonucleoside 5'-diphosphate + ATP = a ribonucleoside 5'-triphosphate + ADP. Functionally, major role in the synthesis of nucleoside triphosphates other than ATP. The ATP gamma phosphate is transferred to the NDP beta phosphate via a ping-pong mechanism, using a phosphorylated active-site intermediate. This Aspergillus fumigatus (strain ATCC MYA-4609 / CBS 101355 / FGSC A1100 / Af293) (Neosartorya fumigata) protein is Nucleoside diphosphate kinase (ndk1).